A 195-amino-acid polypeptide reads, in one-letter code: Cytochrome c oxidase assembly protein CtaG (195 aa).

Residues 1-9 lie on the Cytoplasmic side of the membrane; that stretch reads MALNGPQKT. Residues 10-30 form a helical; Signal-anchor for type II membrane protein membrane-spanning segment; it reads VVQLVGVVVLMGGLAWASVPF. The Periplasmic segment spans residues 31–195; the sequence is YDWFCRVTGF…DTSGAETELN (165 aa).

Belongs to the COX11/CtaG family.

The protein localises to the cell inner membrane. Exerts its effect at some terminal stage of cytochrome c oxidase synthesis, probably by being involved in the insertion of the copper B into subunit I. The sequence is that of Cytochrome c oxidase assembly protein CtaG from Ruegeria sp. (strain TM1040) (Silicibacter sp.).